The chain runs to 983 residues: Alanine--tRNA ligase, mitochondrial (983 aa).

A mitochondrion-targeting transit peptide spans 1 to 24 (MTSTTGLRNLTLSFKKQLTTSTRT). The residue at position 504 (serine 504) is a Phosphoserine. Residues histidine 625, histidine 629, cysteine 744, and histidine 748 each coordinate Zn(2+). A Phosphoserine modification is found at serine 975.

This sequence belongs to the class-II aminoacyl-tRNA synthetase family. In terms of assembly, monomer. Zn(2+) serves as cofactor.

The protein resides in the cytoplasm. It is found in the mitochondrion. The catalysed reaction is tRNA(Ala) + L-alanine + ATP = L-alanyl-tRNA(Ala) + AMP + diphosphate. Catalyzes the attachment of alanine to tRNA(Ala) in a two-step reaction: alanine is first activated by ATP to form Ala-AMP and then transferred to the acceptor end of tRNA(Ala). Also edits incorrectly charged tRNA(Ala) via its editing domain. This is Alanine--tRNA ligase, mitochondrial from Saccharomyces cerevisiae (strain ATCC 204508 / S288c) (Baker's yeast).